Here is a 560-residue protein sequence, read N- to C-terminus: Excitatory amino acid transporter 5 (560 aa).

Topologically, residues 1-16 (MVPHAILARGRDVCRR) are cytoplasmic. 3 consecutive transmembrane segments (helical) span residues 17–37 (NGLL…GFFL), 60–80 (MLKM…LASL), and 94–114 (AYYL…VSII). At 115 to 216 (HPGSAAQKET…EVVYKSEPGT (102 aa)) the chain is on the extracellular side. N-linked (GlcNAc...) asparagine glycosylation is present at N191. A run of 7 helical transmembrane segments spans residues 217–237 (SDGM…IMLG), 260–280 (IVAV…AGKI), 300–320 (VVCG…FFIT), 330–350 (GILQ…TLPI), 372–392 (VGAT…AIFI), 414–434 (AASI…VIVL), and 457–477 (FRTM…AHIC).

Belongs to the dicarboxylate/amino acid:cation symporter (DAACS) (TC 2.A.23) family. SLC1A7 subfamily. As to quaternary structure, interacts with the PDZ domains of DLG4. Expressed primarily in retina. Detectable in liver, heart, muscle and brain.

It is found in the photoreceptor inner segment membrane. It localises to the synaptic cell membrane. It carries out the reaction K(+)(in) + L-glutamate(out) + 3 Na(+)(out) + H(+)(out) = K(+)(out) + L-glutamate(in) + 3 Na(+)(in) + H(+)(in). The catalysed reaction is K(+)(in) + L-aspartate(out) + 3 Na(+)(out) + H(+)(out) = K(+)(out) + L-aspartate(in) + 3 Na(+)(in) + H(+)(in). It catalyses the reaction D-aspartate(out) + K(+)(in) + 3 Na(+)(out) + H(+)(out) = D-aspartate(in) + K(+)(out) + 3 Na(+)(in) + H(+)(in). Its function is as follows. Sodium-dependent, high-affinity amino acid transporter that mediates the uptake of L-glutamate and also L-aspartate and D-aspartate. Functions as a symporter that transports one amino acid molecule together with two or three Na(+) ions and one proton, in parallel with the counter-transport of one K(+) ion. Acts primarily as an inhibitory glutamate-gated chloride channel being a major inhibitory presynaptic receptor at mammalian rod bipolar cell axon terminals. Glutamate binding gates a large Cl(-) conductance that mediates inhibition, affecting visual processing in the retina. This chain is Excitatory amino acid transporter 5, found in Homo sapiens (Human).